The primary structure comprises 135 residues: Small ribosomal subunit protein eS6 (135 aa).

This sequence belongs to the eukaryotic ribosomal protein eS6 family.

The chain is Small ribosomal subunit protein eS6 from Methanospirillum hungatei JF-1 (strain ATCC 27890 / DSM 864 / NBRC 100397 / JF-1).